Reading from the N-terminus, the 412-residue chain is Tryptophan synthase beta chain (412 aa).

Position 105 is an N6-(pyridoxal phosphate)lysine (Lys-105).

This sequence belongs to the TrpB family. In terms of assembly, tetramer of two alpha and two beta chains. Requires pyridoxal 5'-phosphate as cofactor.

It catalyses the reaction (1S,2R)-1-C-(indol-3-yl)glycerol 3-phosphate + L-serine = D-glyceraldehyde 3-phosphate + L-tryptophan + H2O. Its pathway is amino-acid biosynthesis; L-tryptophan biosynthesis; L-tryptophan from chorismate: step 5/5. In terms of biological role, the beta subunit is responsible for the synthesis of L-tryptophan from indole and L-serine. The protein is Tryptophan synthase beta chain (trpB) of Synechocystis sp. (strain ATCC 27184 / PCC 6803 / Kazusa).